A 620-amino-acid chain; its full sequence is 1-deoxy-D-xylulose-5-phosphate synthase (620 aa).

Thiamine diphosphate-binding positions include His-80 and 121–123 (GHS). Mg(2+) is bound at residue Asp-152. Residues 153–154 (GA), Asn-181, Tyr-288, and Glu-370 contribute to the thiamine diphosphate site. Asn-181 serves as a coordination point for Mg(2+).

It belongs to the transketolase family. DXPS subfamily. As to quaternary structure, homodimer. Mg(2+) serves as cofactor. The cofactor is thiamine diphosphate.

It carries out the reaction D-glyceraldehyde 3-phosphate + pyruvate + H(+) = 1-deoxy-D-xylulose 5-phosphate + CO2. The protein operates within metabolic intermediate biosynthesis; 1-deoxy-D-xylulose 5-phosphate biosynthesis; 1-deoxy-D-xylulose 5-phosphate from D-glyceraldehyde 3-phosphate and pyruvate: step 1/1. Its function is as follows. Catalyzes the acyloin condensation reaction between C atoms 2 and 3 of pyruvate and glyceraldehyde 3-phosphate to yield 1-deoxy-D-xylulose-5-phosphate (DXP). In Enterobacter sp. (strain 638), this protein is 1-deoxy-D-xylulose-5-phosphate synthase.